The sequence spans 31 residues: Toxin BmKK12 (31 aa).

Glutamine 1 carries the post-translational modification Pyrrolidone carboxylic acid. Intrachain disulfides connect cysteine 4-cysteine 20, cysteine 10-cysteine 25, and cysteine 14-cysteine 27. Proline 31 carries the proline amide modification.

Belongs to the short scorpion toxin superfamily. Potassium channel inhibitor family. Alpha-KTx 17 subfamily. The N-terminus is blocked. Expressed by the venom gland.

The protein localises to the secreted. Blocker of potassium channels (Kv). This chain is Toxin BmKK12, found in Olivierus martensii (Manchurian scorpion).